We begin with the raw amino-acid sequence, 236 residues long: Small ribosomal subunit protein eS6 (236 aa).

Ser232 and Ser233 each carry phosphoserine.

The protein belongs to the eukaryotic ribosomal protein eS6 family. Phosphorylated.

In Candida glabrata (strain ATCC 2001 / BCRC 20586 / JCM 3761 / NBRC 0622 / NRRL Y-65 / CBS 138) (Yeast), this protein is Small ribosomal subunit protein eS6 (RPS6A).